The chain runs to 254 residues: Proline-rich protein 23A3 (254 aa).

3 disordered regions span residues 1–50 (MLRT…LEAP), 161–196 (ASPPDDQANGNFSSIPGVPSPLSQDQVPGPSTGAEQ), and 212–254 (PFPG…LVYE). Residues 35–50 (EPACPEPLAQPELEAP) show a composition bias toward low complexity. Residues 214-241 (PGSPLQPLPPSPSRNPQEQLPPCPPCSP) are compositionally biased toward pro residues. Positions 243–254 (APRRARKRLVYE) are enriched in basic residues.

It belongs to the PRR23 family.

In Mus musculus (Mouse), this protein is Proline-rich protein 23A3.